Here is a 109-residue protein sequence, read N- to C-terminus: uncharacterized protein (109 aa).

A helical membrane pass occupies residues 90–107 (IICNFWGSLLGVGIAFYQ).

It is found in the membrane. This is an uncharacterized protein from Saccharomyces cerevisiae (strain ATCC 204508 / S288c) (Baker's yeast).